The following is a 501-amino-acid chain: Trans-cinnamate 4-monooxygenase (501 aa).

The helical transmembrane segment at 3–23 (LVLLEKALLGLFAAAVLAVAV) threads the bilayer. (E)-cinnamate contacts are provided by residues 213–218 (RSRLSQ) and Ala302. Cys443 provides a ligand contact to heme.

It belongs to the cytochrome P450 family. Heme serves as cofactor.

The protein localises to the membrane. It catalyses the reaction (E)-cinnamate + reduced [NADPH--hemoprotein reductase] + O2 = (E)-4-coumarate + oxidized [NADPH--hemoprotein reductase] + H2O + H(+). It functions in the pathway phenylpropanoid metabolism; trans-4-coumarate biosynthesis; trans-4-coumarate from trans-cinnamate: step 1/1. Functionally, catalyzes the first oxidative step of the phenylpropanoid pathway in higher plants by transforming trans-cinnamate into p-coumarate. The compounds formed by this pathway are essential components for lignification, pollination, and defense against ultraviolet light, predators and pathogens. Can also use 2-naphthoic acid as substrate. In Sorghum bicolor (Sorghum), this protein is Trans-cinnamate 4-monooxygenase.